A 461-amino-acid polypeptide reads, in one-letter code: Aspartic proteinase NANA, chloroplast (461 aa).

The N-linked (GlcNAc...) asparagine glycan is linked to asparagine 86. Positions 106–456 (YFTEIRVGTP…DLMASTLSFA (351 aa)) constitute a Peptidase A1 domain. Aspartate 124 is a catalytic residue. Residue asparagine 274 is glycosylated (N-linked (GlcNAc...) asparagine). Residue aspartate 338 is part of the active site. N-linked (GlcNAc...) asparagine glycosylation is present at asparagine 386.

Belongs to the peptidase A1 family.

Its subcellular location is the plastid. The protein resides in the chloroplast. Repressed by pepstatin A. In terms of biological role, aspartic proteinase that can use azocasein as substrate and regulates endogenous sugar levels (e.g. sucrose, glucose and fructose) by modulating starch accumulation and remobilization. Influences general morphology and development. This Arabidopsis thaliana (Mouse-ear cress) protein is Aspartic proteinase NANA, chloroplast.